The sequence spans 852 residues: Potassium voltage-gated channel subfamily KQT member 2 (852 aa).

Residues 1–90 are Cytoplasmic-facing; the sequence is MVQKSRNGGV…LYNVLERPRG (90 aa). At S52 the chain carries Phosphoserine; by PKA. The chain crosses the membrane as a helical span at residues 91–113; that stretch reads WAFIYHAYVFLLVFSCLVLSVFS. Residues 114-123 lie on the Extracellular side of the membrane; sequence TIKEYEKSSE. The chain crosses the membrane as a helical span at residues 124-145; that stretch reads GALYILEIVTIVVFGVEYFVRI. The Cytoplasmic portion of the chain corresponds to 146–163; it reads WAAGCCCRYRGWRGRLKF. A helical membrane pass occupies residues 164–183; the sequence is ARKPFCVIDIMVLIASIAVL. Residues 184 to 196 lie on the Extracellular side of the membrane; it reads AAGSQGNVFATSA. Residues 197-215 traverse the membrane as a helical; Voltage-sensor segment; it reads LRSLRFLQILRMIRMDRRG. R214 serves as a coordination point for a 1,2-diacyl-sn-glycero-3-phospho-(1D-myo-inositol-4,5-bisphosphate). The Cytoplasmic segment spans residues 216–227; that stretch reads GTWKLLGSVVYA. The interval 222–323 is mediates interaction with SLC5A3; sequence GSVVYAHSKE…SGFALKVQEQ (102 aa). A helical transmembrane segment spans residues 228 to 253; it reads HSKELVTAWYIGFLCLILASFLVYLA. K230 lines the a 1,2-diacyl-sn-glycero-3-phospho-(1D-myo-inositol-4,5-bisphosphate) pocket. Residues 254–263 lie on the Extracellular side of the membrane; sequence EKGENDHFDT. An intramembrane region (pore-forming) is located at residues 264–276; that stretch reads YADALWWGLITLT. Residues 277 to 282 carry the Selectivity filter motif; that stretch reads TIGYGD. Residues 277–287 lie on the Extracellular side of the membrane; the sequence is TIGYGDKYPQT. A helical membrane pass occupies residues 288-314; sequence WNGRLLAATFTLIGVSFFALPAGILGS. Residues 315 to 852 lie on the Cytoplasmic side of the membrane; the sequence is GFALKVQEQH…GDVAWAGPRK (538 aa). The segment at 317 to 522 is mediates interaction with calmodulin; sequence ALKVQEQHRQ…EDLTPGLKVS (206 aa). K327 is an a 1,2-diacyl-sn-glycero-3-phospho-(1D-myo-inositol-4,5-bisphosphate) binding site. The interval 404-469 is disordered; the sequence is TFRKEPQPEP…SKVPKSWSFG (66 aa). Positions 440 to 457 are enriched in polar residues; that stretch reads PQAQTVRRSPSADQSLDD. A phosphoserine mark is found at S448, S450, S454, S458, S460, and S489. Disordered stretches follow at residues 579–601, 643–662, and 672–718; these read GPTI…EDPS, GAKE…SRDH, and IVRS…DHGS. Residues 583–592 show a composition bias toward basic and acidic residues; sequence TDKDRTKGPA. The residue at position 655 (S655) is a Phosphoserine. Residues S781 and S783 each carry the phosphoserine modification. Positions 818 to 852 are disordered; it reads ESDTDSDLCTPCGPPPRSATGEGPFGDVAWAGPRK.

It belongs to the potassium channel family. KQT (TC 1.A.1.15) subfamily. Kv7.2/KCNQ2 sub-subfamily. Heterotetramer with KCNQ3; forms heterotetrameric M-channel responsible for the M-current. Homotetrameric; forms a functional homotetrameric channel resulting in the expression of a small M-current. Interacts with calmodulin; the interaction is calcium-independent, constitutive and participates in the proper assembly of a functional M-channel. May associate with KCNE2. Interacts with IQCJ-SCHIP1. Interacts (via the pore module) with SLC5A3/SMIT1; forms a coregulatory complex that alters ion selectivity, voltage dependence and gating kinetics of the channel. Interacts with AKAP5; the interaction may help KCNQ2 channel complex to retain calcium-bound calmodulin. KCNQ2/KCNQ3 heteromeric current can be increased by intracellular cyclic AMP, an effect that depends on phosphorylation of Ser-52 in the N-terminal region. In terms of processing, KCNQ2/KCNQ3 are ubiquitinated by NEDD4L. Ubiquitination leads to protein degradation. Degradation induced by NEDD4L is inhibited by USP36. Expressed in brain and sympathetic ganglia. In brain, expressed in cortex, hippocampus, and cerebellum. In sympathetic ganglia, expressed at lower levels in celiac ganglia and superior mesenteric ganglia than in superior cervical ganglia.

The protein resides in the cell membrane. The enzyme catalyses K(+)(in) = K(+)(out). It carries out the reaction Rb(+)(in) = Rb(+)(out). The catalysed reaction is Cs(+)(in) = Cs(+)(out). It catalyses the reaction Na(+)(in) = Na(+)(out). Phosphatidylinositol-4,5-bisphosphate (PIP2) potentiates the activation of KCNQ channels by enhancing the electro-mechanical coupling of the voltage-sensing domain (VSD) and the pore-forming domain (PD). In the closed state of the channel, PIP2 is anchored at the S2-S3 loop; upon channel activation, PIP2 interacts with the S4-S5 linker and is involved in channel gating. Calcium suppresses KCNQ2 and KCNQ2-KCNQ3 channel currents, with calcium-bound calmodulin inducing a change in channel configuration which leads to the reduction of channel affinity for PIP2 and subsequent current suppression. Functionally, pore-forming subunit of the voltage-gated potassium (Kv) M-channel which is responsible for the M-current, a key controller of neuronal excitability. M-channel is composed of pore-forming subunits KCNQ2 and KCNQ3 assembled as heterotetramers. The native M-current has a slowly activating and deactivating potassium conductance which plays a critical role in determining the subthreshold electrical excitability of neurons as well as the responsiveness to synaptic inputs. M-channel is selectively permeable in vitro to other cations besides potassium, in decreasing order of affinity K(+) &gt; Rb(+) &gt; Cs(+) &gt; Na(+). M-channel association with SLC5A3/SMIT1 alters channel ion selectivity, increasing Na(+) and Cs(+) permeation relative to K(+). Suppressed by activation of the muscarinic acetylcholine receptor CHRM1. The sequence is that of Potassium voltage-gated channel subfamily KQT member 2 from Rattus norvegicus (Rat).